The chain runs to 754 residues: Zinc finger protein with KRAB and SCAN domains 7 (754 aa).

Lysine 28 participates in a covalent cross-link: Glycyl lysine isopeptide (Lys-Gly) (interchain with G-Cter in SUMO2). An SCAN box domain is found at 54–136 (RLHFRQLCYH…AVVEDFQRHL (83 aa)). The tract at residues 157-215 (TALGTTKESPPTSPLSGGSAPGAHLEPPYDPGTHHLPSGDFAQCTSPVPTLPQVGNSGD) is disordered. 2 stretches are compositionally biased toward polar residues: residues 158 to 172 (ALGTTKESPPTSPLS) and 199 to 215 (QCTSPVPTLPQVGNSGD). Residues 231-306 (VAYEDLSVDY…TSGGLFGVVP (76 aa)) enclose the KRAB domain. C2H2-type zinc fingers lie at residues 383–405 (YRCDECGKAFNRSSHLIGHQRIH), 411–433 (YECNECGKTFRQTSQLIVHLRTH), 439–461 (YECSECGKAYRHSSHLIQHQRLH), 467–489 (YKCNECAKAFTQSSRLTDHQRTH), 495–517 (YECNECGEAFIRSKSLARHQVLH), 523–545 (YKCNECGRAFCSNRNLIDHQRIH), 551–573 (YECSECGKAFSRSKCLIRHQSLH), 579–601 (YKCSECGKAFNQNSQLIEHERIH), 607–629 (FECSECGKAFGLSKCLIRHQRLH), and 635–657 (YKCNECGKSFNQNSHLIIHQRIH). The segment at 663-685 (YECNECGKVFSYSSSLMVHQRTH) adopts a C2H2-type 11; degenerate zinc-finger fold. C2H2-type zinc fingers lie at residues 691 to 713 (YKCNDCGKAFSDSSQLIVHQRVH) and 719 to 741 (YECSECGKAFSQRSTFNHHQRTH). A disordered region spans residues 735 to 754 (NHHQRTHTGEKSSGLAWSVS).

Belongs to the krueppel C2H2-type zinc-finger protein family.

The protein localises to the nucleus. May be involved in transcriptional regulation. In Homo sapiens (Human), this protein is Zinc finger protein with KRAB and SCAN domains 7 (ZKSCAN7).